Consider the following 157-residue polypeptide: Crossover junction endodeoxyribonuclease RuvC (157 aa).

Residues Asp-7, Glu-67, and Asp-140 contribute to the active site. Positions 7, 67, and 140 each coordinate Mg(2+).

This sequence belongs to the RuvC family. As to quaternary structure, homodimer which binds Holliday junction (HJ) DNA. The HJ becomes 2-fold symmetrical on binding to RuvC with unstacked arms; it has a different conformation from HJ DNA in complex with RuvA. In the full resolvosome a probable DNA-RuvA(4)-RuvB(12)-RuvC(2) complex forms which resolves the HJ. Mg(2+) is required as a cofactor.

The protein resides in the cytoplasm. It carries out the reaction Endonucleolytic cleavage at a junction such as a reciprocal single-stranded crossover between two homologous DNA duplexes (Holliday junction).. In terms of biological role, the RuvA-RuvB-RuvC complex processes Holliday junction (HJ) DNA during genetic recombination and DNA repair. Endonuclease that resolves HJ intermediates. Cleaves cruciform DNA by making single-stranded nicks across the HJ at symmetrical positions within the homologous arms, yielding a 5'-phosphate and a 3'-hydroxyl group; requires a central core of homology in the junction. The consensus cleavage sequence is 5'-(A/T)TT(C/G)-3'. Cleavage occurs on the 3'-side of the TT dinucleotide at the point of strand exchange. HJ branch migration catalyzed by RuvA-RuvB allows RuvC to scan DNA until it finds its consensus sequence, where it cleaves and resolves the cruciform DNA. This Rickettsia massiliae (strain Mtu5) protein is Crossover junction endodeoxyribonuclease RuvC.